Reading from the N-terminus, the 167-residue chain is Putative N-acetylgalactosamine-6-phosphate deacetylase (167 aa).

Belongs to the metallo-dependent hydrolases superfamily. NagA family.

The catalysed reaction is N-acetyl-D-galactosamine 6-phosphate + H2O = D-galactosamine 6-phosphate + acetate. This is Putative N-acetylgalactosamine-6-phosphate deacetylase (agaA) from Escherichia coli (strain K12).